The chain runs to 326 residues: Tagatose 1,6-diphosphate aldolase (326 aa).

The protein belongs to the aldolase LacD family.

The catalysed reaction is D-tagatofuranose 1,6-bisphosphate = D-glyceraldehyde 3-phosphate + dihydroxyacetone phosphate. It participates in carbohydrate metabolism; D-tagatose 6-phosphate degradation; D-glyceraldehyde 3-phosphate and glycerone phosphate from D-tagatose 6-phosphate: step 2/2. The protein is Tagatose 1,6-diphosphate aldolase of Staphylococcus aureus (strain bovine RF122 / ET3-1).